Reading from the N-terminus, the 820-residue chain is Serine/threonine-protein phosphatase 4 regulatory subunit 3-A (820 aa).

The WH1 domain occupies 1–100 (MSDTRRRVKV…DEIWEKICQV (100 aa)). The span at 682–694 (ELWFNEDDEEEGE) shows a compositional bias: acidic residues. Disordered regions lie at residues 682–712 (ELWF…FPEG) and 750–820 (AANG…RLGS). Positions 701–712 (EKTKPEDDFPEG) are enriched in basic and acidic residues. Polar residues-rich tracts occupy residues 750–761 (AANGANSTNSKS) and 768–790 (PATS…STKG). Residues 798-809 (YPDDEDEEEEED) are compositionally biased toward acidic residues.

Belongs to the SMEK family. In terms of assembly, serine/threonine-protein phosphatase 4 (PP4) occurs in different assemblies of the catalytic and one or more regulatory subunits.

Regulatory subunit of serine/threonine-protein phosphatase 4 (PP4). The polypeptide is Serine/threonine-protein phosphatase 4 regulatory subunit 3-A (Xenopus laevis (African clawed frog)).